The primary structure comprises 234 residues: Thiamine-phosphate synthase (234 aa).

Residues 52–56 (QYRSK) and Asn-84 contribute to the 4-amino-2-methyl-5-(diphosphooxymethyl)pyrimidine site. Mg(2+)-binding residues include Asp-85 and Asp-104. Residue Ser-123 participates in 4-amino-2-methyl-5-(diphosphooxymethyl)pyrimidine binding. Position 150–152 (150–152 (SVT)) interacts with 2-[(2R,5Z)-2-carboxy-4-methylthiazol-5(2H)-ylidene]ethyl phosphate. Residue Lys-153 coordinates 4-amino-2-methyl-5-(diphosphooxymethyl)pyrimidine. Gly-180 provides a ligand contact to 2-[(2R,5Z)-2-carboxy-4-methylthiazol-5(2H)-ylidene]ethyl phosphate.

It belongs to the thiamine-phosphate synthase family. Requires Mg(2+) as cofactor.

The enzyme catalyses 2-[(2R,5Z)-2-carboxy-4-methylthiazol-5(2H)-ylidene]ethyl phosphate + 4-amino-2-methyl-5-(diphosphooxymethyl)pyrimidine + 2 H(+) = thiamine phosphate + CO2 + diphosphate. The catalysed reaction is 2-(2-carboxy-4-methylthiazol-5-yl)ethyl phosphate + 4-amino-2-methyl-5-(diphosphooxymethyl)pyrimidine + 2 H(+) = thiamine phosphate + CO2 + diphosphate. It catalyses the reaction 4-methyl-5-(2-phosphooxyethyl)-thiazole + 4-amino-2-methyl-5-(diphosphooxymethyl)pyrimidine + H(+) = thiamine phosphate + diphosphate. It functions in the pathway cofactor biosynthesis; thiamine diphosphate biosynthesis; thiamine phosphate from 4-amino-2-methyl-5-diphosphomethylpyrimidine and 4-methyl-5-(2-phosphoethyl)-thiazole: step 1/1. In terms of biological role, condenses 4-methyl-5-(beta-hydroxyethyl)thiazole monophosphate (THZ-P) and 2-methyl-4-amino-5-hydroxymethyl pyrimidine pyrophosphate (HMP-PP) to form thiamine monophosphate (TMP). This Nitrosospira multiformis (strain ATCC 25196 / NCIMB 11849 / C 71) protein is Thiamine-phosphate synthase.